We begin with the raw amino-acid sequence, 962 residues long: Protease 3 (962 aa).

The first 23 residues, 1-23, serve as a signal peptide directing secretion; that stretch reads MPRSIWFKALLLFVALWAPLSQA. Histidine 88 contributes to the Zn(2+) binding site. The Proton acceptor role is filled by glutamate 91. Zn(2+) contacts are provided by histidine 92 and glutamate 169.

The protein belongs to the peptidase M16 family. Monomer. Zn(2+) serves as cofactor.

It localises to the periplasm. The catalysed reaction is Preferential cleavage of 16-Tyr-|-Leu-17 and 25-Phe-|-Tyr-26 bonds of oxidized insulin B chain. Also acts on other substrates of Mw less than 7 kDa such as insulin and glucagon.. Endopeptidase that degrades small peptides of less than 7 kDa, such as glucagon and insulin. The chain is Protease 3 (ptrA) from Escherichia coli O6:H1 (strain CFT073 / ATCC 700928 / UPEC).